Here is a 241-residue protein sequence, read N- to C-terminus: 3-oxoacyl-[acyl-carrier-protein] reductase FabG (241 aa).

Residues 13 to 16 (GASG), Ser-38, 57 to 58 (EV), and Asn-83 each bind NADP(+). Ser-135 provides a ligand contact to substrate. The active-site Proton acceptor is Tyr-148. NADP(+) is bound by residues 148–152 (YCASK) and Ile-181.

It belongs to the short-chain dehydrogenases/reductases (SDR) family. Homotetramer.

The catalysed reaction is a (3R)-hydroxyacyl-[ACP] + NADP(+) = a 3-oxoacyl-[ACP] + NADPH + H(+). It participates in lipid metabolism; fatty acid biosynthesis. In terms of biological role, catalyzes the NADPH-dependent reduction of beta-ketoacyl-ACP substrates to beta-hydroxyacyl-ACP products, the first reductive step in the elongation cycle of fatty acid biosynthesis. The polypeptide is 3-oxoacyl-[acyl-carrier-protein] reductase FabG (fabG) (Rickettsia typhi (strain ATCC VR-144 / Wilmington)).